Reading from the N-terminus, the 286-residue chain is MLRPKKQSLKPKLKHRPFLKWAGGKFRLTDEINKAFPNKKNCLIEPFVGAGAVFLNSNFERYILADINPDLINLFNIVKXNVDGYIEDCKPIFFADDANTPDYYYAKRRQFNASTEPFERSIIFLYLNRFGFNGLCRYNSKNEFNVPFGAYKTHYFPEDELRYFAHKAQSAVFLCCDFQKTFEFADKDSVIYCDPPYAPLQQETNFTGYAGNEFGLAQQRALADLAKSIQKEKQISILISNHDTKFTREIYNGAKFKRVKVQRSISQNPEKRVKVKELIAIFGARK.

Residues W21, K25, D66, and D194 each contribute to the S-adenosyl-L-methionine site.

It belongs to the N(4)/N(6)-methyltransferase family.

The enzyme catalyses a 2'-deoxyadenosine in DNA + S-adenosyl-L-methionine = an N(6)-methyl-2'-deoxyadenosine in DNA + S-adenosyl-L-homocysteine + H(+). In terms of biological role, an alpha subtype methylase, recognizes the double-stranded sequence 5'-GATC-3' and methylates A-2. May be involved in methyl-directed DNA mismatch repair, initiation of chromosome replication and gene expression. The chain is DNA adenine methylase (dam) from Haemophilus influenzae (strain ATCC 51907 / DSM 11121 / KW20 / Rd).